A 295-amino-acid polypeptide reads, in one-letter code: Pyridoxal 5'-phosphate synthase subunit PdxS (295 aa).

Aspartate 23 is a binding site for D-ribose 5-phosphate. The active-site Schiff-base intermediate with D-ribose 5-phosphate is lysine 80. Glycine 152 is a D-ribose 5-phosphate binding site. Arginine 164 provides a ligand contact to D-glyceraldehyde 3-phosphate. D-ribose 5-phosphate is bound by residues glycine 213 and 234–235; that span reads GS.

Belongs to the PdxS/SNZ family. In terms of assembly, in the presence of PdxT, forms a dodecamer of heterodimers.

It catalyses the reaction aldehydo-D-ribose 5-phosphate + D-glyceraldehyde 3-phosphate + L-glutamine = pyridoxal 5'-phosphate + L-glutamate + phosphate + 3 H2O + H(+). It participates in cofactor biosynthesis; pyridoxal 5'-phosphate biosynthesis. Its function is as follows. Catalyzes the formation of pyridoxal 5'-phosphate from ribose 5-phosphate (RBP), glyceraldehyde 3-phosphate (G3P) and ammonia. The ammonia is provided by the PdxT subunit. Can also use ribulose 5-phosphate and dihydroxyacetone phosphate as substrates, resulting from enzyme-catalyzed isomerization of RBP and G3P, respectively. In Methanopyrus kandleri (strain AV19 / DSM 6324 / JCM 9639 / NBRC 100938), this protein is Pyridoxal 5'-phosphate synthase subunit PdxS.